A 207-amino-acid chain; its full sequence is Hepatic lectin (207 aa).

N-acetylmethionine is present on methionine 1. Topologically, residues 1–23 (MDEERLSDNVRLYKGGSIRQGLR) are cytoplasmic. The helical; Signal-anchor for type II membrane protein transmembrane segment at 24–48 (SFAAVYVLLALSFLLLTLLSSVSLA) threads the bilayer. Topologically, residues 49–207 (RIAALSSKLS…YYVCEKPLPK (159 aa)) are extracellular. Asparagine 67 carries N-linked (GlcNAc...) asparagine glycosylation. The C-type lectin domain maps to 77–203 (PCGAQSRQWE…TYECYYVCEK (127 aa)). 3 cysteine pairs are disulfide-bonded: cysteine 78-cysteine 92, cysteine 109-cysteine 201, and cysteine 179-cysteine 193.

Post-translationally, some or all of the cysteines are involved in disulfide bonds.

It localises to the membrane. In terms of biological role, hepatic lectin is a membrane receptor protein that recognizes and binds exposed N-acetylglucosamine moieties of plasma glycoproteins, thus mediating their clearance (from the circulation) and endocytosis. In Gallus gallus (Chicken), this protein is Hepatic lectin.